A 130-amino-acid polypeptide reads, in one-letter code: MSMQDPISDMLTRVRNGQAANKVAVKMPSSKLKVAIAALLKAEGYIVDFAVEGEAKPELEVTLKYFQAKPVIEQLKRVSRPGLRVYKKKDQLPSVMGGLGIAIVSTSKGLMSDRAARKAGLGGEIICYVA.

This sequence belongs to the universal ribosomal protein uS8 family. Part of the 30S ribosomal subunit. Contacts proteins S5 and S12.

Its function is as follows. One of the primary rRNA binding proteins, it binds directly to 16S rRNA central domain where it helps coordinate assembly of the platform of the 30S subunit. The chain is Small ribosomal subunit protein uS8 from Vibrio campbellii (strain ATCC BAA-1116).